The following is a 145-amino-acid chain: Cell division protein SepF (145 aa).

The protein belongs to the SepF family. Homodimer. Interacts with FtsZ.

It is found in the cytoplasm. Functionally, cell division protein that is part of the divisome complex and is recruited early to the Z-ring. Probably stimulates Z-ring formation, perhaps through the cross-linking of FtsZ protofilaments. Its function overlaps with FtsA. This Lactobacillus acidophilus (strain ATCC 700396 / NCK56 / N2 / NCFM) protein is Cell division protein SepF.